Here is an 89-residue protein sequence, read N- to C-terminus: Small ribosomal subunit protein uS15 (89 aa).

Belongs to the universal ribosomal protein uS15 family. As to quaternary structure, part of the 30S ribosomal subunit. Forms a bridge to the 50S subunit in the 70S ribosome, contacting the 23S rRNA.

One of the primary rRNA binding proteins, it binds directly to 16S rRNA where it helps nucleate assembly of the platform of the 30S subunit by binding and bridging several RNA helices of the 16S rRNA. In terms of biological role, forms an intersubunit bridge (bridge B4) with the 23S rRNA of the 50S subunit in the ribosome. This Bartonella henselae (strain ATCC 49882 / DSM 28221 / CCUG 30454 / Houston 1) (Rochalimaea henselae) protein is Small ribosomal subunit protein uS15.